The following is a 510-amino-acid chain: Anaerobic nitric oxide reductase transcription regulator NorR (510 aa).

A Sigma-54 factor interaction domain is found at 188–417; that stretch reads IIGNSQGMRT…LEHVIKRAAV (230 aa). Residues 216–223 and 279–288 each bind ATP; these read GETGVGKE and ADGGTLFLDE. Residues 486 to 505 constitute a DNA-binding region (H-T-H motif); the sequence is WAATARQLELDSGNLHRLAK.

The protein operates within nitrogen metabolism; nitric oxide reduction. Its function is as follows. Required for the expression of anaerobic nitric oxide (NO) reductase, acts as a transcriptional activator for at least the norVW operon. Activation also requires sigma-54. This is Anaerobic nitric oxide reductase transcription regulator NorR from Vibrio vulnificus (strain CMCP6).